We begin with the raw amino-acid sequence, 283 residues long: Nucleoid occlusion protein (283 aa).

The disordered stretch occupies residues 1-26; sequence MKQPFSRLFGFGDKQDQEMETGKQEE. Positions 13–26 are enriched in basic and acidic residues; it reads DKQDQEMETGKQEE. A DNA-binding region (H-T-H motif) is located at residues 143–162; that stretch reads ESLAQRLGKGQSTIANKLRL.

It belongs to the ParB family.

The protein resides in the cytoplasm. The protein localises to the nucleoid. In terms of biological role, effects nucleoid occlusion by binding relatively nonspecifically to DNA and preventing the assembly of the division machinery in the vicinity of the nucleoid, especially under conditions that disturb the cell cycle. It helps to coordinate cell division and chromosome segregation by preventing the formation of the Z ring through the nucleoid, which would cause chromosome breakage. This Halalkalibacterium halodurans (strain ATCC BAA-125 / DSM 18197 / FERM 7344 / JCM 9153 / C-125) (Bacillus halodurans) protein is Nucleoid occlusion protein.